Reading from the N-terminus, the 66-residue chain is UPF0337 protein SpyM3_1723 (66 aa).

Residues 1-10 show a composition bias toward basic and acidic residues; the sequence is MSEEKLKSKI. Positions 1–23 are disordered; the sequence is MSEEKLKSKIEQASGGLKEGAGK.

Belongs to the UPF0337 (CsbD) family.

The chain is UPF0337 protein SpyM3_1723 from Streptococcus pyogenes serotype M3 (strain ATCC BAA-595 / MGAS315).